Reading from the N-terminus, the 82-residue chain is Small ribosomal subunit protein eS21y (82 aa).

At methionine 1 the chain carries N-acetylmethionine.

Belongs to the eukaryotic ribosomal protein eS21 family.

This Arabidopsis thaliana (Mouse-ear cress) protein is Small ribosomal subunit protein eS21y (RPS21C).